The following is a 174-amino-acid chain: ATP synthase subunit delta, sodium ion specific (174 aa).

This sequence belongs to the ATPase delta chain family. In terms of assembly, F-type ATPases have 2 components, F(1) - the catalytic core - and F(0) - the membrane proton channel. F(1) has five subunits: alpha(3), beta(3), gamma(1), delta(1), epsilon(1). F(0) has three main subunits: a(1), b(2) and c(10-14). The alpha and beta chains form an alternating ring which encloses part of the gamma chain. F(1) is attached to F(0) by a central stalk formed by the gamma and epsilon chains, while a peripheral stalk is formed by the delta and b chains.

The protein resides in the cell inner membrane. F(1)F(0) ATP synthase produces ATP from ADP in the presence of a proton or sodium gradient. F-type ATPases consist of two structural domains, F(1) containing the extramembraneous catalytic core and F(0) containing the membrane proton channel, linked together by a central stalk and a peripheral stalk. During catalysis, ATP synthesis in the catalytic domain of F(1) is coupled via a rotary mechanism of the central stalk subunits to proton translocation. In terms of biological role, this protein is part of the stalk that links CF(0) to CF(1). It either transmits conformational changes from CF(0) to CF(1) or is implicated in proton conduction. This chain is ATP synthase subunit delta, sodium ion specific, found in Propionigenium modestum.